An 800-amino-acid chain; its full sequence is Phenylalanine--tRNA ligase beta subunit (800 aa).

Positions 39 to 148 (TAALAPFVVG…ADTPVGVPLV (110 aa)) constitute a tRNA-binding domain. In terms of domain architecture, B5 spans 402 to 478 (VWRRTIALRP…RLHGFDLVPA (77 aa)). The Mg(2+) site is built by Asp456, Asp462, Glu465, and Glu466. The region spanning 706-799 (SPFQPVARDF…VTKLTGGSLR (94 aa)) is the FDX-ACB domain.

The protein belongs to the phenylalanyl-tRNA synthetase beta subunit family. Type 1 subfamily. In terms of assembly, tetramer of two alpha and two beta subunits. Requires Mg(2+) as cofactor.

The protein localises to the cytoplasm. The enzyme catalyses tRNA(Phe) + L-phenylalanine + ATP = L-phenylalanyl-tRNA(Phe) + AMP + diphosphate + H(+). This chain is Phenylalanine--tRNA ligase beta subunit, found in Rhodospirillum rubrum (strain ATCC 11170 / ATH 1.1.1 / DSM 467 / LMG 4362 / NCIMB 8255 / S1).